We begin with the raw amino-acid sequence, 118 residues long: MIHAIGTDLVELERIKSIGIDRFKDKILNEDEKNEYAKINHENRKLTYLAGRFAVKESLFKCFKAGDKTANYKDFSVLNDSVGAPYVVSKHTSDFVVHITISHTNLYAIAFVVLETKV.

The Mg(2+) site is built by Asp-8 and Glu-57.

The protein belongs to the P-Pant transferase superfamily. AcpS family. Mg(2+) is required as a cofactor.

The protein localises to the cytoplasm. The catalysed reaction is apo-[ACP] + CoA = holo-[ACP] + adenosine 3',5'-bisphosphate + H(+). Its function is as follows. Transfers the 4'-phosphopantetheine moiety from coenzyme A to a Ser of acyl-carrier-protein. The sequence is that of Holo-[acyl-carrier-protein] synthase from Acholeplasma laidlawii (strain PG-8A).